The sequence spans 271 residues: Thiamine thiazole synthase (271 aa).

NAD(+) contacts are provided by residues Ser39, Glu58 to Arg59, Gly66, Val130, and His158 to Asp160. Fe cation contacts are provided by Asp160 and His175. Met225 is an NAD(+) binding site. Arg235 provides a ligand contact to glycine.

This sequence belongs to the THI4 family. Homooctamer; tetramer of dimers. It depends on Fe(2+) as a cofactor.

It carries out the reaction hydrogen sulfide + glycine + NAD(+) = ADP-5-ethyl-4-methylthiazole-2-carboxylate + nicotinamide + 3 H2O + H(+). The protein operates within cofactor biosynthesis; thiamine diphosphate biosynthesis. In terms of biological role, involved in the biosynthesis of the thiazole moiety of thiamine. Catalyzes the conversion of NAD and glycine to adenosine diphosphate 5-(2-hydroxyethyl)-4-methylthiazole-2-carboxylate (ADT), an adenylated thiazole intermediate, using free sulfide as a source of sulfur. This is Thiamine thiazole synthase from Metallosphaera sedula (strain ATCC 51363 / DSM 5348 / JCM 9185 / NBRC 15509 / TH2).